The sequence spans 101 residues: Urease subunit beta (101 aa).

It belongs to the urease beta subunit family. Heterotrimer of UreA (gamma), UreB (beta) and UreC (alpha) subunits. Three heterotrimers associate to form the active enzyme.

Its subcellular location is the cytoplasm. The catalysed reaction is urea + 2 H2O + H(+) = hydrogencarbonate + 2 NH4(+). It participates in nitrogen metabolism; urea degradation; CO(2) and NH(3) from urea (urease route): step 1/1. This chain is Urease subunit beta, found in Leptothrix cholodnii (strain ATCC 51168 / LMG 8142 / SP-6) (Leptothrix discophora (strain SP-6)).